A 287-amino-acid chain; its full sequence is Light-independent protochlorophyllide reductase iron-sulfur ATP-binding protein (287 aa).

ATP contacts are provided by residues 10–15 and Lys-39; that span reads GVGKST. Ser-14 is a Mg(2+) binding site. Cys-95 and Cys-129 together coordinate [4Fe-4S] cluster. ATP is bound at residue 181-182; sequence NR.

It belongs to the NifH/BchL/ChlL family. Homodimer. Protochlorophyllide reductase is composed of three subunits; BchL, BchN and BchB. Requires [4Fe-4S] cluster as cofactor.

The catalysed reaction is chlorophyllide a + oxidized 2[4Fe-4S]-[ferredoxin] + 2 ADP + 2 phosphate = protochlorophyllide a + reduced 2[4Fe-4S]-[ferredoxin] + 2 ATP + 2 H2O. The protein operates within porphyrin-containing compound metabolism; bacteriochlorophyll biosynthesis (light-independent). In terms of biological role, component of the dark-operative protochlorophyllide reductase (DPOR) that uses Mg-ATP and reduced ferredoxin to reduce ring D of protochlorophyllide (Pchlide) to form chlorophyllide a (Chlide). This reaction is light-independent. The L component serves as a unique electron donor to the NB-component of the complex, and binds Mg-ATP. The sequence is that of Light-independent protochlorophyllide reductase iron-sulfur ATP-binding protein from Heliobacterium modesticaldum (strain ATCC 51547 / Ice1).